Here is a 416-residue protein sequence, read N- to C-terminus: Serine hydroxymethyltransferase (416 aa).

(6S)-5,6,7,8-tetrahydrofolate is bound by residues Leu-118 and 122–124 (GHL). At Lys-226 the chain carries N6-(pyridoxal phosphate)lysine. Residue 350 to 352 (SPF) participates in (6S)-5,6,7,8-tetrahydrofolate binding.

The protein belongs to the SHMT family. As to quaternary structure, homodimer. It depends on pyridoxal 5'-phosphate as a cofactor.

It is found in the cytoplasm. It carries out the reaction (6R)-5,10-methylene-5,6,7,8-tetrahydrofolate + glycine + H2O = (6S)-5,6,7,8-tetrahydrofolate + L-serine. It functions in the pathway one-carbon metabolism; tetrahydrofolate interconversion. Its pathway is amino-acid biosynthesis; glycine biosynthesis; glycine from L-serine: step 1/1. In terms of biological role, catalyzes the reversible interconversion of serine and glycine with tetrahydrofolate (THF) serving as the one-carbon carrier. This reaction serves as the major source of one-carbon groups required for the biosynthesis of purines, thymidylate, methionine, and other important biomolecules. Also exhibits THF-independent aldolase activity toward beta-hydroxyamino acids, producing glycine and aldehydes, via a retro-aldol mechanism. In Sulfurovum sp. (strain NBC37-1), this protein is Serine hydroxymethyltransferase.